A 184-amino-acid polypeptide reads, in one-letter code: Peptidyl-tRNA hydrolase (184 aa).

Tyrosine 13 is a binding site for tRNA. Histidine 18 acts as the Proton acceptor in catalysis. TRNA contacts are provided by phenylalanine 59, asparagine 61, and asparagine 105.

It belongs to the PTH family. As to quaternary structure, monomer.

It is found in the cytoplasm. It carries out the reaction an N-acyl-L-alpha-aminoacyl-tRNA + H2O = an N-acyl-L-amino acid + a tRNA + H(+). Hydrolyzes ribosome-free peptidyl-tRNAs (with 1 or more amino acids incorporated), which drop off the ribosome during protein synthesis, or as a result of ribosome stalling. In terms of biological role, catalyzes the release of premature peptidyl moieties from peptidyl-tRNA molecules trapped in stalled 50S ribosomal subunits, and thus maintains levels of free tRNAs and 50S ribosomes. This Sulfurimonas denitrificans (strain ATCC 33889 / DSM 1251) (Thiomicrospira denitrificans (strain ATCC 33889 / DSM 1251)) protein is Peptidyl-tRNA hydrolase.